Here is a 134-residue protein sequence, read N- to C-terminus: Large ribosomal subunit protein bL20 (134 aa).

It belongs to the bacterial ribosomal protein bL20 family.

Binds directly to 23S ribosomal RNA and is necessary for the in vitro assembly process of the 50S ribosomal subunit. It is not involved in the protein synthesizing functions of that subunit. This Rhizobium etli (strain ATCC 51251 / DSM 11541 / JCM 21823 / NBRC 15573 / CFN 42) protein is Large ribosomal subunit protein bL20.